The sequence spans 54 residues: MLSWAITFLIIAIIAAVLGFGGIAGTATGIAKILFVVFLVMFIASFFFGRRGRG.

2 consecutive transmembrane segments (helical) span residues 4–24 (WAIT…GGIA) and 29–49 (GIAK…FFFG).

This sequence belongs to the UPF0391 family.

The protein resides in the cell membrane. This chain is UPF0391 membrane protein Pfl01_0044, found in Pseudomonas fluorescens (strain Pf0-1).